Consider the following 460-residue polypeptide: MASSQLEFNVERKQPELLGPAEPTPYELKELSDIDDQDGVRLFLTAIFIYPPPTKTSMPTRKTDPASDIRRGLSKAMVYYYPFAGRIREGPNRKLSVDCTGEGIVFCEADADIRLDGLGDVEVLRPPYPFIDKMTLGEGSAILGAPLVYVQVTRFACGGFIITGRFNHVMADAPGFTMFMKAAADLARGATVPMPLPVWERERYRSRVPPRVTFAHHEYMHVDDPPPRPTSEPWSLHSAFFTKADVATLRAQLPADLRKAATSFDIITACMWRCRVSALQYGPDEVVRLIVAVNSRTKFDPPLTGYYGNGLMLPAAVTEAGKLVGSDLGYAVELVREAKGKVTEEYVRSAADFLVLNGRVHFVVSNTFLVSDLRRLIDLANMDWGWGKAVSGGPVDVGENVISFLATSKNSAGEEGAVVPFCLPDSALGRFTSEVKKLVCFRPLENAAASNPDHGYMSRM.

Residues 1 to 23 form a disordered region; it reads MASSQLEFNVERKQPELLGPAEP. Residues His-168 and Asp-383 each act as proton acceptor in the active site. A Microbody targeting signal motif is present at residues 458–460; sequence SRM.

Belongs to the plant acyltransferase family. In terms of assembly, monomer. In terms of tissue distribution, confined to immature fruits perisperm. Also detectable in roots.

The protein localises to the cytoplasm. The enzyme catalyses piperidine + (E,E)-piperoyl-CoA = piperine + CoA + H(+). The protein operates within aromatic compound metabolism. Its function is as follows. Involved in the biosynthesis of aromatic piperamides natural products such as piperine (1-piperoyl-piperidine), the pungent principle contributing, together with several terpenoids, to the aromatic properties of black pepper fruits, and displaying numerous pharmacological activities such as antiproliferative, antitumor, antiangiogenesis, antioxidant, antidiabetic, antiobesity, cardioprotective, antimicrobial, antiaging, and immunomodulatory effects. Can use piperidine and benzylamine as acceptors and various CoA-esters with aliphatic and aromatic amines as CoA-donors, including piperoyl-CoA, hexanoyl-CoA and octanoyl-CoA, and, to a lower extent, benzoyl-CoA. Mediates the conversion of piperidine to three piperine isomers in the presence of piperoyl-CoA. Its ability to convert in vitro piperidine to hexanoylpiperidine in the presence of hexanoyl-CoA, and to octanoylpiperidine in the presence of octanoyl-CoA is not confirmed in vivo according to fruits metabolome analysis. The chain is Piperamide synthase from Piper nigrum (Black pepper).